Reading from the N-terminus, the 302-residue chain is Lipoyl synthase (302 aa).

Cys-44, Cys-49, Cys-55, Cys-70, Cys-74, Cys-77, and Ser-283 together coordinate [4Fe-4S] cluster. The Radical SAM core domain maps to 56-272 (WSKKHATVMI…AKVARSKGFL (217 aa)).

Belongs to the radical SAM superfamily. Lipoyl synthase family. It depends on [4Fe-4S] cluster as a cofactor.

Its subcellular location is the cytoplasm. It catalyses the reaction [[Fe-S] cluster scaffold protein carrying a second [4Fe-4S](2+) cluster] + N(6)-octanoyl-L-lysyl-[protein] + 2 oxidized [2Fe-2S]-[ferredoxin] + 2 S-adenosyl-L-methionine + 4 H(+) = [[Fe-S] cluster scaffold protein] + N(6)-[(R)-dihydrolipoyl]-L-lysyl-[protein] + 4 Fe(3+) + 2 hydrogen sulfide + 2 5'-deoxyadenosine + 2 L-methionine + 2 reduced [2Fe-2S]-[ferredoxin]. It functions in the pathway protein modification; protein lipoylation via endogenous pathway; protein N(6)-(lipoyl)lysine from octanoyl-[acyl-carrier-protein]: step 2/2. Functionally, catalyzes the radical-mediated insertion of two sulfur atoms into the C-6 and C-8 positions of the octanoyl moiety bound to the lipoyl domains of lipoate-dependent enzymes, thereby converting the octanoylated domains into lipoylated derivatives. This chain is Lipoyl synthase, found in Orientia tsutsugamushi (strain Boryong) (Rickettsia tsutsugamushi).